Consider the following 155-residue polypeptide: Ribosomal RNA large subunit methyltransferase H (155 aa).

S-adenosyl-L-methionine is bound by residues L72, G103, and 122-127; that span reads LSALTL.

The protein belongs to the RNA methyltransferase RlmH family. In terms of assembly, homodimer.

Its subcellular location is the cytoplasm. It catalyses the reaction pseudouridine(1915) in 23S rRNA + S-adenosyl-L-methionine = N(3)-methylpseudouridine(1915) in 23S rRNA + S-adenosyl-L-homocysteine + H(+). Its function is as follows. Specifically methylates the pseudouridine at position 1915 (m3Psi1915) in 23S rRNA. The polypeptide is Ribosomal RNA large subunit methyltransferase H (Salmonella choleraesuis (strain SC-B67)).